Here is a 153-residue protein sequence, read N- to C-terminus: General odorant-binding protein lush (153 aa).

A signal peptide spans 1 to 29 (MKHWKRRSSAVFAIVLQVLVLLLPDPAVA). 3 cysteine pairs are disulfide-bonded: Cys-46–Cys-79, Cys-75–Cys-132, and Cys-121–Cys-141. Residues Ser-81 and Thr-86 each coordinate 1-propanol. Residues Ser-81 and Thr-86 each coordinate butan-1-ol. Ethanol is bound by residues Ser-81 and Thr-86.

Belongs to the PBP/GOBP family. Specifically expressed in chemosensory system in both males and females. Expressed in a subset of trichoid chemosensory sensilla located on the ventral-lateral surface of the third antennal segment. Secreted from non-neuronal support cells into the sensillum lymph that bathes the olfactory neurons within these sensilla.

It is found in the secreted. Functionally, odorant-binding protein required for olfactory behavior and for activity of pheromone-sensitive neurons. Binds to alcohols and mediates avoidance behavior to high concentrations of alcohols, the alcohol-binding possibly resulting in activation of receptors on T2B neurons, the activation of these receptors inhibiting these neurons. Acts in concert with Snmp and lush to capture cVA molecules on the surface of Or67d expressing olfactory dendrites and facilitate their transfer to the odorant-receptor Orco complex. Required for cVA response, probably by binding to VA. May act by serving as an adapter that bridges the presence of gaseous pheromone molecules, cVA, to activation of specific neuronal receptors expressed on T1 olfactory neurons, possibly via a specific conformational change induced by cVA that in turn activates T1 receptors. T1 neurons are excited by the pheromone VA, while T2 neurons are inhibited by alcohols. Also binds to phthalates. This chain is General odorant-binding protein lush (lush), found in Drosophila melanogaster (Fruit fly).